The sequence spans 2211 residues: Nonribosomal peptide synthetase 13 (2211 aa).

The segment at 76 to 475 (TYAELDSLSD…IEHHLQLTLP (400 aa)) is adenylation 1. The Carrier 1 domain occupies 594-671 (PPSTPKEATI…EQSKRAGLIQ (78 aa)). An O-(pantetheine 4'-phosphoryl)serine modification is found at S631. Residues 710 to 975 (EDIYPCTALQ…IATVPTRIRV (266 aa)) are condensation 1. The segment at 1169–1563 (TYRELWAHSS…LGAVEASVMR (395 aa)) is adenylation 2. The region spanning 1677–1756 (PMSDDNERRL…RSRHLITEQA (80 aa)) is the Carrier 2 domain. The residue at position 1714 (S1714) is an O-(pantetheine 4'-phosphoryl)serine. Residues 1814–2069 (HFQFDLSGAV…CTNYIPYRLS (256 aa)) are condensation 2.

The protein belongs to the NRP synthetase family.

It carries out the reaction L-proline + L-tryptophan + 2 ATP = brevianamide F + 2 AMP + 2 diphosphate + 2 H(+). It functions in the pathway mycotoxin biosynthesis. Functionally, nonribosomal peptide synthetase; part of the gene cluster that mediates the biosynthesis of fumitremorgins, indole alkaloids that carry not only intriguing chemical structures, but also interesting biological and pharmacological activities. The biosynthesis of fumitremorgin-type alkaloids begins by condensation of the two amino acids L-tryptophan and L-proline to brevianamide F, catalyzed by the non-ribosomal peptide synthetase ftmA. Brevianamide F is then prenylated by the prenyltransferase ftmPT1/ftmB in the presence of dimethylallyl diphosphate, resulting in the formation of tryprostatin B. The three cytochrome P450 monooxygenases, ftmP450-1/ftmC, ftmP450-2/ftmE and ftmP450-3/FtmG, are responsible for the conversion of tryprostatin B to 6-hydroxytryprostatin B, tryprostatin A to fumitremorgin C and fumitremorgin C to 12,13-dihydroxyfumitremorgin C, respectively. The putative methyltransferase ftmMT/ftmD is expected for the conversion of 6-hydroxytryprostatin B to tryprostatin A. FtmPT2/FtmH catalyzes the prenylation of 12,13-dihydroxyfumitre-morgin C in the presence of dimethylallyl diphosphate, resulting in the formation of fumitremorgin B. Fumitremorgin B is further converted to verruculogen by ftmOx1/ftmF via the insertion of an endoperoxide bond between the two prenyl moieties. In some fungal species, verruculogen is further converted to fumitremorgin A, but the enzymes involved in this step have not been identified yet. The chain is Nonribosomal peptide synthetase 13 from Aspergillus fumigatus (Neosartorya fumigata).